A 186-amino-acid polypeptide reads, in one-letter code: MTEKKEMEVVKGLNVERYMGRWYEIASFPSRFQPKNGVDTRATYTLNPDGTIHVLNETWSNGKRGFIEGSAYKADPKSDEAKLKVKFYVPPFLPIIPVTGDYWVLYIDPDYQHALIGQPSRSYLWILSRTAQMEEETYKQLVEKAVEEGYDISKLHKTPQSDTPPESNTAPEDSKGVWWFKSLFGK.

The short motif at 90–97 (PPFLPIIP) is the HPR (Hydrophobic proline-rich) element. Positions 154 to 174 (KLHKTPQSDTPPESNTAPEDS) are disordered. A compositionally biased stretch (polar residues) spans 158–171 (TPQSDTPPESNTAP).

Belongs to the calycin superfamily. Lipocalin family. In terms of tissue distribution, expressed ubiquitously at similar levels, except in dry seeds (at protein level). Present in seeds.

The protein localises to the cell membrane. The protein resides in the cytoplasm. Its subcellular location is the plastid. It is found in the chloroplast membrane. Involved in basal (BT) and acquired thermotolerance (AT), probably by preventing plasma membrane lipids peroxidation induced by severe heat-shock (HS). Lipocalin that confers protection against oxidative stress caused by heat, freezing, paraquat and light. Confers resistance to high salt (NaCl) levels, probably by protecting chloroplasts from ion toxicity via ion homeostasis maintenance. Required for seed longevity by ensuring polyunsaturated lipids integrity. In Arabidopsis thaliana (Mouse-ear cress), this protein is Temperature-induced lipocalin-1.